The chain runs to 149 residues: MFKNPAERPRKLHELSSALEIPYDELRLNCVYCKGQLTETEVLDFAFTDLTIVYRDDTPHGVCTKCLRFYSKVSEFRWYRYSVYGTTLEKLTNKGICDLLIRCITCQRPLCPEEKQRHLDKKKRFHNIGGRWTGRCIACWRRPRTETQV.

Zinc fingers lie at residues 30-66 (CVYCKGQLTETEVLDFAFTDLTIVYRDDTPHGVCTKC) and 103-139 (CITCQRPLCPEEKQRHLDKKKRFHNIGGRWTGRCIAC). The PDZ-binding domain signature appears at 147–149 (TQV).

It belongs to the papillomaviridae E6 protein family. As to quaternary structure, forms homodimers. Interacts with ubiquitin-protein ligase UBE3A/E6-AP and thus forms a complex with human TP53. Interacts with human NFX1 and MAGI3. Interacts with human IRF3; this interaction inhibits the establishment of antiviral state. Interacts with human TYK2; this interaction inhibits JAK-STAT activation by interferon alpha. Interacts with host DLG1; this interaction leads to the proteasomal degradation of DLG1.

The protein resides in the host cytoplasm. It localises to the host nucleus. In terms of biological role, plays a major role in the induction and maintenance of cellular transformation. Acts mainly as an oncoprotein by stimulating the destruction of many host cell key regulatory proteins. E6 associates with host UBE3A/E6-AP ubiquitin-protein ligase, and inactivates tumor suppressors TP53 and TP73 by targeting them to the 26S proteasome for degradation. In turn, DNA damage and chromosomal instabilities increase and lead to cell proliferation and cancer development. The complex E6/E6AP targets several other substrates to degradation via the proteasome including host DLG1 or NFX1, a repressor of human telomerase reverse transcriptase (hTERT). The resulting increased expression of hTERT prevents the shortening of telomere length leading to cell immortalization. Other cellular targets including BAK1, Fas-associated death domain-containing protein (FADD) and procaspase 8, are degraded by E6/E6AP causing inhibition of apoptosis. E6 also inhibits immune response by interacting with host IRF3 and TYK2. These interactions prevent IRF3 transcriptional activities and inhibit TYK2-mediated JAK-STAT activation by interferon alpha resulting in inhibition of the interferon signaling pathway. The chain is Protein E6 from Human papillomavirus 31.